The chain runs to 356 residues: S-adenosylmethionine:tRNA ribosyltransferase-isomerase (356 aa).

The protein belongs to the QueA family. In terms of assembly, monomer.

The protein localises to the cytoplasm. It catalyses the reaction 7-aminomethyl-7-carbaguanosine(34) in tRNA + S-adenosyl-L-methionine = epoxyqueuosine(34) in tRNA + adenine + L-methionine + 2 H(+). It functions in the pathway tRNA modification; tRNA-queuosine biosynthesis. In terms of biological role, transfers and isomerizes the ribose moiety from AdoMet to the 7-aminomethyl group of 7-deazaguanine (preQ1-tRNA) to give epoxyqueuosine (oQ-tRNA). The sequence is that of S-adenosylmethionine:tRNA ribosyltransferase-isomerase from Escherichia coli O6:H1 (strain CFT073 / ATCC 700928 / UPEC).